Reading from the N-terminus, the 1806-residue chain is uncharacterized protein (1806 aa).

Disordered regions lie at residues 38-131 (EASG…SPLF) and 158-282 (KAVS…KPRP). Over residues 51–70 (KSPLRSPARLLPLPRLAPKP) the composition is skewed to low complexity. A phosphoserine mark is found at Ser-52, Ser-56, Ser-79, Ser-87, Ser-88, Ser-92, and Ser-128. Over residues 82 to 100 (PSLRPSSTGPSPSGGLSEE) the composition is skewed to low complexity. The segment covering 226-236 (DTARPLVEPRP) has biased composition (basic and acidic residues). Ser-244 and Ser-284 each carry phosphoserine. Disordered regions lie at residues 299–320 (RKVADEGSGPTAGDMAGLERPR), 355–431 (KEKM…GGEW), 456–604 (SESP…PEDD), and 627–696 (QSGR…ELRP). The residue at position 366 (Ser-366) is a Phosphoserine. Phosphothreonine is present on Thr-378. Ser-384 carries the phosphoserine modification. Residues 386–400 (WEEKAKLDPEPEKAA) show a composition bias toward basic and acidic residues. A Phosphoserine modification is found at Ser-404. Positions 412–422 (ELAEVKSRVAD) are enriched in basic and acidic residues. Positions 456 to 470 (SESPLATPASPSAAP) are enriched in low complexity. Residues Ser-458 and Ser-508 each carry the phosphoserine modification. Positions 514–523 (LFSSSASSNE) are enriched in polar residues. Composition is skewed to basic and acidic residues over residues 524–549 (VKYEKSAELSGEFPKEPREKQKEGHS) and 564–573 (TLRDKSRQTE). Thr-600 is modified (phosphothreonine). 2 stretches are compositionally biased toward basic and acidic residues: residues 641 to 652 (AHARVSEPRPRP) and 661 to 674 (DPPDMTKLKKENSR). At Ser-749 the chain carries Phosphoserine. Disordered regions lie at residues 860 to 901 (QHEG…QART), 969 to 989 (SPHVGHRRTDYVSPTASALRK), and 1000 to 1019 (QEVNPGASRDQTSPAVKQGS). Residues 889–900 (RATNGPSDSQAR) show a composition bias toward polar residues. Phosphoserine is present on residues Ser-969 and Ser-981. A compositionally biased stretch (basic and acidic residues) spans 969-978 (SPHVGHRRTD). Thr-1059 is subject to Phosphothreonine. A phosphoserine mark is found at Ser-1063 and Ser-1154. Positions 1134-1178 (RGSEDGPRPQSNWKESANKMSPSGGAPQTTPTLRSRPKDLPVRRK) are disordered. Positions 1142–1166 (PQSNWKESANKMSPSGGAPQTTPTL) are enriched in polar residues. Position 1163 is a phosphothreonine (Thr-1163). Residues 1169–1178 (RPKDLPVRRK) show a composition bias toward basic and acidic residues. A phosphothreonine mark is found at Thr-1179 and Thr-1185. 2 disordered regions span residues 1216 to 1265 (PGEA…PASS) and 1291 to 1493 (KSSP…VASV). Ser-1224 carries the post-translational modification Phosphoserine. Thr-1226 bears the Phosphothreonine mark. Basic and acidic residues-rich tracts occupy residues 1244-1254 (EQRRRSLKEMP) and 1317-1331 (DPRKKTGFAEDDRKA). Ser-1366 carries the phosphoserine modification. Composition is skewed to basic and acidic residues over residues 1393–1410 (DHPRDCGRVPLDIKRAYS) and 1426–1437 (HEARERRREQPK). The residue at position 1441 (Ser-1441) is a Phosphoserine. The span at 1462–1483 (DSHKVLPRDLEKEDAPQEKERP) shows a compositional bias: basic and acidic residues. Residues Ser-1488 and Ser-1506 each carry the phosphoserine modification. Disordered stretches follow at residues 1512-1627 (QLKQ…KRVD) and 1642-1806 (ALKT…ENQV). Basic and acidic residues predominate over residues 1522 to 1531 (TEPKDTDTLV). Polar residues predominate over residues 1537-1568 (QYGTWTEQCQSGESLATESPDSSATSTRKQPP). 2 positions are modified to phosphoserine: Ser-1555 and Ser-1662. Over residues 1649 to 1666 (LSKRSRRRAPISHSLRRS) the composition is skewed to basic residues. Composition is skewed to basic and acidic residues over residues 1667-1677 (RFSESESRSPL) and 1689-1714 (DSTEEKSPRKEESDEEETASKAERTP). Residues Ser-1701, Ser-1757, Ser-1760, and Ser-1786 each carry the phosphoserine modification. The segment covering 1753–1764 (PQPKSPKSPFQP) has biased composition (low complexity).

This is an uncharacterized protein from Homo sapiens (Human).